The sequence spans 208 residues: Thymidylate kinase (208 aa).

An ATP-binding site is contributed by 9–16 (GGEGCGKS).

This sequence belongs to the thymidylate kinase family.

It catalyses the reaction dTMP + ATP = dTDP + ADP. Phosphorylation of dTMP to form dTDP in both de novo and salvage pathways of dTTP synthesis. This is Thymidylate kinase from Dehalococcoides mccartyi (strain CBDB1).